The sequence spans 547 residues: Chaperonin GroEL 1 (547 aa).

ATP is bound by residues Thr30–Pro33, Lys51, Asp87–Thr91, Gly415, and Asp496.

Belongs to the chaperonin (HSP60) family. In terms of assembly, forms a cylinder of 14 subunits composed of two heptameric rings stacked back-to-back. Interacts with the co-chaperonin GroES.

The protein localises to the cytoplasm. The catalysed reaction is ATP + H2O + a folded polypeptide = ADP + phosphate + an unfolded polypeptide.. Together with its co-chaperonin GroES, plays an essential role in assisting protein folding. The GroEL-GroES system forms a nano-cage that allows encapsulation of the non-native substrate proteins and provides a physical environment optimized to promote and accelerate protein folding. This chain is Chaperonin GroEL 1, found in Rhodopseudomonas palustris (strain BisB5).